The primary structure comprises 334 residues: Protein-methionine-sulfoxide reductase catalytic subunit MsrP (334 aa).

Residues 1 to 44 (MKKNQFLKESDITAESVFFMKRRQVLKALGISAAALSLPHAAHA) constitute a signal peptide (tat-type signal). Mo-molybdopterin contacts are provided by residues Asn-88, 91-92 (YE), Cys-146, Thr-181, Asn-233, Arg-238, and 249-251 (GIK).

This sequence belongs to the MsrP family. As to quaternary structure, heterodimer of a catalytic subunit (MsrP) and a heme-binding subunit (MsrQ). Mo-molybdopterin serves as cofactor. Predicted to be exported by the Tat system. The position of the signal peptide cleavage has not been experimentally proven.

Its subcellular location is the periplasm. The catalysed reaction is L-methionyl-[protein] + a quinone + H2O = L-methionyl-(S)-S-oxide-[protein] + a quinol. The enzyme catalyses L-methionyl-[protein] + a quinone + H2O = L-methionyl-(R)-S-oxide-[protein] + a quinol. Functionally, part of the MsrPQ system that repairs oxidized periplasmic proteins containing methionine sulfoxide residues (Met-O), using respiratory chain electrons. Thus protects these proteins from oxidative-stress damage caused by reactive species of oxygen and chlorine generated by the host defense mechanisms. MsrPQ is essential for the maintenance of envelope integrity under bleach stress, rescuing a wide series of structurally unrelated periplasmic proteins from methionine oxidation, including the primary periplasmic chaperone SurA and the lipoprotein Pal. The catalytic subunit MsrP is non-stereospecific, being able to reduce both (R-) and (S-) diastereoisomers of methionine sulfoxide. The protein is Protein-methionine-sulfoxide reductase catalytic subunit MsrP of Shigella dysenteriae serotype 1 (strain Sd197).